We begin with the raw amino-acid sequence, 62 residues long: Large ribosomal subunit protein uL30 (62 aa).

Belongs to the universal ribosomal protein uL30 family. In terms of assembly, part of the 50S ribosomal subunit.

The chain is Large ribosomal subunit protein uL30 from Alkalilimnicola ehrlichii (strain ATCC BAA-1101 / DSM 17681 / MLHE-1).